The chain runs to 191 residues: Threonylcarbamoyl-AMP synthase (191 aa).

The YrdC-like domain occupies 7 to 191 (QSELNDALKI…FHASTGKRLR (185 aa)).

The protein belongs to the SUA5 family. TsaC subfamily.

Its subcellular location is the cytoplasm. The enzyme catalyses L-threonine + hydrogencarbonate + ATP = L-threonylcarbamoyladenylate + diphosphate + H2O. In terms of biological role, required for the formation of a threonylcarbamoyl group on adenosine at position 37 (t(6)A37) in tRNAs that read codons beginning with adenine. Catalyzes the conversion of L-threonine, HCO(3)(-)/CO(2) and ATP to give threonylcarbamoyl-AMP (TC-AMP) as the acyladenylate intermediate, with the release of diphosphate. The chain is Threonylcarbamoyl-AMP synthase from Psychromonas ingrahamii (strain DSM 17664 / CCUG 51855 / 37).